The following is a 66-amino-acid chain: MPKFKTHRASAKRFKKTASGALKRGHAYTSHRFHGKTKKQRRQLRKSALVSHSDMKRIRQMLSQMK.

Basic residues-rich tracts occupy residues 1–16 (MPKFKTHRASAKRFKK) and 23–45 (KRGHAYTSHRFHGKTKKQRRQLR). The tract at residues 1–66 (MPKFKTHRAS…RIRQMLSQMK (66 aa)) is disordered.

The protein belongs to the bacterial ribosomal protein bL35 family.

In Lacticaseibacillus casei (strain BL23) (Lactobacillus casei), this protein is Large ribosomal subunit protein bL35.